The chain runs to 393 residues: S-adenosylmethionine synthase 3 (393 aa).

Glu-9 provides a ligand contact to Mg(2+). His-15 is a binding site for ATP. Glu-43 is a K(+) binding site. Glu-56 and Gln-99 together coordinate L-methionine. Residues 167 to 169, 235 to 238, Asp-246, 252 to 253, Ala-269, Lys-273, and Lys-277 each bind ATP; these read NGK, SGRF, and RK. Asp-246 serves as a coordination point for L-methionine. Lys-277 contributes to the L-methionine binding site.

It belongs to the AdoMet synthase family. As to quaternary structure, homotetramer. Mn(2+) is required as a cofactor. It depends on Mg(2+) as a cofactor. Requires Co(2+) as cofactor. The cofactor is K(+). As to expression, mostly expressed in flowers, seedpods and roots, and, to a lower extent, in stems and leaves.

The protein resides in the cytoplasm. The enzyme catalyses L-methionine + ATP + H2O = S-adenosyl-L-methionine + phosphate + diphosphate. It participates in amino-acid biosynthesis; S-adenosyl-L-methionine biosynthesis; S-adenosyl-L-methionine from L-methionine: step 1/1. Its function is as follows. Catalyzes the formation of S-adenosylmethionine from methionine and ATP. The reaction comprises two steps that are both catalyzed by the same enzyme: formation of S-adenosylmethionine (AdoMet) and triphosphate, and subsequent hydrolysis of the triphosphate. The protein is S-adenosylmethionine synthase 3 (MSAMS3) of Brassica juncea (Indian mustard).